The chain runs to 296 residues: Cobalamin trafficking protein CblD (296 aa).

A mitochondrion-targeting transit peptide spans 1 to 38 (MAHVLCNRARLVSYLPGFCSLVKRVINPRAFSTAGSSG). Lys-203 bears the N6-acetyllysine mark.

In terms of assembly, heterodimer with MMACHC. Forms a multiprotein complex with MMACHC, MTR and MTRR.

The protein localises to the cytoplasm. The protein resides in the mitochondrion. Its function is as follows. Involved in cobalamin metabolism and trafficking. Plays a role in regulating the biosynthesis and the proportion of two coenzymes, methylcob(III)alamin (MeCbl) and 5'-deoxyadenosylcobalamin (AdoCbl). Promotes oxidation of cob(II)alamin bound to MMACHC. The processing of cobalamin in the cytosol occurs in a multiprotein complex composed of at least MMACHC, MMADHC, MTRR (methionine synthase reductase) and MTR (methionine synthase) which may contribute to shuttle safely and efficiently cobalamin towards MTR in order to produce methionine. This Mus musculus (Mouse) protein is Cobalamin trafficking protein CblD.